We begin with the raw amino-acid sequence, 442 residues long: Zinc finger protein sfp1 (442 aa).

Residues 193–208 show a composition bias toward low complexity; the sequence is AASSDMSSDEASSQAE. 2 disordered regions span residues 193–219 and 304–333; these read AASS…MPES and SPFV…HDSP. 2 consecutive C2H2-type zinc fingers follow at residues 350-375 and 399-422; these read YKCP…LHGH and YRCE…THSH.

Its subcellular location is the cytoplasm. The protein resides in the nucleus. The protein is Zinc finger protein sfp1 (sfp1) of Schizosaccharomyces pombe (strain 972 / ATCC 24843) (Fission yeast).